A 296-amino-acid polypeptide reads, in one-letter code: SHSP domain-containing protein CPUR_05420 (296 aa).

The disordered stretch occupies residues 50-83 (AWQTCPQQRHPHQPDVSGPPGSGFGEQPSQDTPN). In terms of domain architecture, sHSP spans 169-296 (ETKKSFTPDI…GKGVKEITIV (128 aa)).

It belongs to the small heat shock protein (HSP20) family.

Its function is as follows. Monooxygenase; part of the ergochrome gene cluster responsible for the typical purple-black color of the ergot sclerotia. The ergochrome gene cluster produces several ergot pigments including the yellow ergochrome secalonic acid and its derivatives, as well as the red anthraquinones endocrocin and clavorubin. The pathway begins with the synthesis of atrochrysone thioester by the polyketide synthase (PKS) CPUR_05437. The atrochrysone carboxyl ACP thioesterase CPUR_05436 then breaks the thioester bond and releases the atrochrysone carboxylic acid from CPUR_05437. The atrochrysone carboxylic acid is then converted to atrochrysone which is further transformed into emodin anthrone. The next step is performed by the anthrone oxygenase CPUR_05434 that catalyzes the oxidation of emodinanthrone to emodin. Emodin is further modified to yield monodictyphenone via several steps involving CPUR_05427, CPUR_05428, CPUR_05429 and CPUR_05430. The short chain dehydrogenase/reductase CPUR_05418 then catalyzes the C-5 ketoreduction to give the xanthone skeleton of the monomeric units. Ergochromes formation requires further dimerization steps of different xanthone units, probably catalyzed by the cytochrome P450 monooxygenase CPUR_05419. CPUR_05425, CPUR_05426 and CPUR_05431 are unique to Claviceps, thus it is likely that they are involved in further modification of xanthone units or in their dimerization. The yellow ergochromes and the red anthraquinone pigments endocrocin and clavorubin are products from the same PKS derived precursors and the latter are likely shunt products in the pathway of xanthone biosynthesis. It is proposed that atrochrysone carboxylic acid released from the PKS CPUR_05437 can also be converted to endocrocin anthrone which is further oxidized into endocrocin by CPUR_05435. Endocrocin could be then modified to clavorubin, possibly by CPUR_05423 and CPUR_05431. Clavorubin is the principal anthraquinone metabolite produced by the cluster with a much higher yield compared to endocrocin. The protein is SHSP domain-containing protein CPUR_05420 of Claviceps purpurea (strain 20.1) (Ergot fungus).